Consider the following 375-residue polypeptide: UDP-N-acetylglucosamine--N-acetylmuramyl-(pentapeptide) pyrophosphoryl-undecaprenol N-acetylglucosamine transferase (375 aa).

UDP-N-acetyl-alpha-D-glucosamine-binding positions include 15–17, asparagine 126, arginine 169, serine 197, and glutamine 298; that span reads TGG.

The protein belongs to the glycosyltransferase 28 family. MurG subfamily.

The protein resides in the cell inner membrane. The enzyme catalyses di-trans,octa-cis-undecaprenyl diphospho-N-acetyl-alpha-D-muramoyl-L-alanyl-D-glutamyl-meso-2,6-diaminopimeloyl-D-alanyl-D-alanine + UDP-N-acetyl-alpha-D-glucosamine = di-trans,octa-cis-undecaprenyl diphospho-[N-acetyl-alpha-D-glucosaminyl-(1-&gt;4)]-N-acetyl-alpha-D-muramoyl-L-alanyl-D-glutamyl-meso-2,6-diaminopimeloyl-D-alanyl-D-alanine + UDP + H(+). The protein operates within cell wall biogenesis; peptidoglycan biosynthesis. Cell wall formation. Catalyzes the transfer of a GlcNAc subunit on undecaprenyl-pyrophosphoryl-MurNAc-pentapeptide (lipid intermediate I) to form undecaprenyl-pyrophosphoryl-MurNAc-(pentapeptide)GlcNAc (lipid intermediate II). The protein is UDP-N-acetylglucosamine--N-acetylmuramyl-(pentapeptide) pyrophosphoryl-undecaprenol N-acetylglucosamine transferase of Rhodopseudomonas palustris (strain BisB18).